Consider the following 233-residue polypeptide: 7-cyano-7-deazaguanine synthase (233 aa).

8–18 lines the ATP pocket; it reads FSGGQDSTTCL. Zn(2+) is bound by residues cysteine 188, cysteine 197, cysteine 200, and cysteine 203.

This sequence belongs to the QueC family. The cofactor is Zn(2+).

The enzyme catalyses 7-carboxy-7-deazaguanine + NH4(+) + ATP = 7-cyano-7-deazaguanine + ADP + phosphate + H2O + H(+). It participates in purine metabolism; 7-cyano-7-deazaguanine biosynthesis. Catalyzes the ATP-dependent conversion of 7-carboxy-7-deazaguanine (CDG) to 7-cyano-7-deazaguanine (preQ(0)). This Klebsiella pneumoniae (strain 342) protein is 7-cyano-7-deazaguanine synthase.